We begin with the raw amino-acid sequence, 1759 residues long: Protein TIC 214 (1759 aa).

A run of 5 helical transmembrane segments spans residues 23–45 (VVVG…LFLL), 64–84 (FITG…HLAL), 129–149 (IFFQ…SSIF), 172–192 (IGWI…LICI), and 221–241 (IFVV…PPPF).

It belongs to the TIC214 family. Part of the Tic complex.

It is found in the plastid. Its subcellular location is the chloroplast inner membrane. Its function is as follows. Involved in protein precursor import into chloroplasts. May be part of an intermediate translocation complex acting as a protein-conducting channel at the inner envelope. The sequence is that of Protein TIC 214 from Phaseolus vulgaris (Kidney bean).